A 225-amino-acid polypeptide reads, in one-letter code: Membrane protein (225 aa).

Over 1-20 (MSNETNCTLDFEQSVQLFKE) the chain is Virion surface. N3 and N6 each carry an N-linked (GlcNAc...) asparagine; by host glycan. Residues 21-41 (YNLFITAFLLFLTIILQYGYA) traverse the membrane as a helical segment. At 42 to 51 (TRSKVIYTLK) the chain is on the intravirion side. Residues 52-72 (MIVLWCFWPLNIAVGVISCIY) traverse the membrane as a helical segment. Residues 73–77 (PPNTG) lie on the Virion surface side of the membrane. Residues 78-98 (GLVAAIILTVFACLSFVGYWI) traverse the membrane as a helical segment. Residues 99–225 (QSIRLFKRCR…VATGGSSLYT (127 aa)) are Intravirion-facing.

It belongs to the gammacoronaviruses M protein family. As to quaternary structure, homomultimer. Interacts with envelope E protein in the budding compartment of the host cell, which is located between endoplasmic reticulum and the Golgi complex. Forms a complex with HE and S proteins. Interacts with nucleocapsid N protein. This interaction probably participates in RNA packaging into the virus.

It is found in the virion membrane. The protein localises to the host Golgi apparatus membrane. Component of the viral envelope that plays a central role in virus morphogenesis and assembly via its interactions with other viral proteins. In Gallus gallus (Chicken), this protein is Membrane protein.